Reading from the N-terminus, the 388-residue chain is Succinate--CoA ligase [ADP-forming] subunit beta (388 aa).

The region spanning 9–244 (KQLFAEYGLP…PSQEDSREAH (236 aa)) is the ATP-grasp domain. ATP contacts are provided by residues K46, 53–55 (GRG), E99, T102, and E107. Mg(2+) contacts are provided by N199 and D213. Substrate is bound by residues N264 and 321–323 (GIV).

Belongs to the succinate/malate CoA ligase beta subunit family. Heterotetramer of two alpha and two beta subunits. Mg(2+) serves as cofactor.

The enzyme catalyses succinate + ATP + CoA = succinyl-CoA + ADP + phosphate. It catalyses the reaction GTP + succinate + CoA = succinyl-CoA + GDP + phosphate. It participates in carbohydrate metabolism; tricarboxylic acid cycle; succinate from succinyl-CoA (ligase route): step 1/1. Its function is as follows. Succinyl-CoA synthetase functions in the citric acid cycle (TCA), coupling the hydrolysis of succinyl-CoA to the synthesis of either ATP or GTP and thus represents the only step of substrate-level phosphorylation in the TCA. The beta subunit provides nucleotide specificity of the enzyme and binds the substrate succinate, while the binding sites for coenzyme A and phosphate are found in the alpha subunit. The sequence is that of Succinate--CoA ligase [ADP-forming] subunit beta from Pseudoalteromonas translucida (strain TAC 125).